The primary structure comprises 360 residues: Phosphoserine aminotransferase (360 aa).

R41 contacts L-glutamate. Pyridoxal 5'-phosphate is bound by residues 75-76 (AS), W101, T151, D171, and Q194. K195 carries the post-translational modification N6-(pyridoxal phosphate)lysine. 236 to 237 (NT) contacts pyridoxal 5'-phosphate.

It belongs to the class-V pyridoxal-phosphate-dependent aminotransferase family. SerC subfamily. Homodimer. Pyridoxal 5'-phosphate serves as cofactor.

It is found in the cytoplasm. It carries out the reaction O-phospho-L-serine + 2-oxoglutarate = 3-phosphooxypyruvate + L-glutamate. The enzyme catalyses 4-(phosphooxy)-L-threonine + 2-oxoglutarate = (R)-3-hydroxy-2-oxo-4-phosphooxybutanoate + L-glutamate. It participates in amino-acid biosynthesis; L-serine biosynthesis; L-serine from 3-phospho-D-glycerate: step 2/3. It functions in the pathway cofactor biosynthesis; pyridoxine 5'-phosphate biosynthesis; pyridoxine 5'-phosphate from D-erythrose 4-phosphate: step 3/5. In terms of biological role, catalyzes the reversible conversion of 3-phosphohydroxypyruvate to phosphoserine and of 3-hydroxy-2-oxo-4-phosphonooxybutanoate to phosphohydroxythreonine. The protein is Phosphoserine aminotransferase of Herpetosiphon aurantiacus (strain ATCC 23779 / DSM 785 / 114-95).